The sequence spans 621 residues: Proton pump-interactor BIP131 (621 aa).

Residues 250–305 (IDEVKRDRQAVRDKIKVLEDQIHAVDGEIAALQDDLTAATARKDKAFEALNELRKT) adopt a coiled-coil conformation. The span at 374 to 387 (SRDGRMRNPDEKPI) shows a compositional bias: basic and acidic residues. The interval 374–572 (SRDGRMRNPD…RSTVTKTKTP (199 aa)) is disordered. Over residues 430-441 (KAPAKAAKAKQP) the composition is skewed to low complexity. A compositionally biased stretch (basic and acidic residues) spans 448 to 516 (PDVHDDEPPK…AEKKLKEKEK (69 aa)). The stretch at 466–524 (EAKLKEMKRQEEIEKNKLALERKKKQAEKQAMKAAARAEKEAEKKLKEKEKKARKRSAT) forms a coiled coil. Residues 589–609 (WGAPMAALAAALVALLGALVY) traverse the membrane as a helical segment.

It belongs to the plant proton pump-interactor protein family. Interacts with BRI1.

Its subcellular location is the cell membrane. In terms of biological role, may regulate plasma membrane ATPase activity. This is Proton pump-interactor BIP131 from Oryza sativa subsp. japonica (Rice).